Reading from the N-terminus, the 235-residue chain is Octanoyltransferase (235 aa).

The BPL/LPL catalytic domain occupies Pro-59–Leu-235. Residues Arg-101–His-108, Ser-168–Gly-170, and Gly-181–Ser-183 each bind substrate. Cys-199 functions as the Acyl-thioester intermediate in the catalytic mechanism.

Belongs to the LipB family.

It localises to the cytoplasm. It carries out the reaction octanoyl-[ACP] + L-lysyl-[protein] = N(6)-octanoyl-L-lysyl-[protein] + holo-[ACP] + H(+). It functions in the pathway protein modification; protein lipoylation via endogenous pathway; protein N(6)-(lipoyl)lysine from octanoyl-[acyl-carrier-protein]: step 1/2. Functionally, catalyzes the transfer of endogenously produced octanoic acid from octanoyl-acyl-carrier-protein onto the lipoyl domains of lipoate-dependent enzymes. Lipoyl-ACP can also act as a substrate although octanoyl-ACP is likely to be the physiological substrate. The sequence is that of Octanoyltransferase from Prochlorococcus marinus (strain MIT 9211).